Reading from the N-terminus, the 138-residue chain is UPF0251 protein Dole_1957 (138 aa).

Belongs to the UPF0251 family.

The chain is UPF0251 protein Dole_1957 from Desulfosudis oleivorans (strain DSM 6200 / JCM 39069 / Hxd3) (Desulfococcus oleovorans).